Here is a 152-residue protein sequence, read N- to C-terminus: SKP1-like protein 11 (152 aa).

The tract at residues 94–152 is interaction with the F-box domain of F-box proteins; sequence ILAANYLNIKSLLDLTCQTVADMIKGKTPEEIRSTFNIENDFTPEEEEAVRKENQWAFE.

This sequence belongs to the SKP1 family. Part of a SCF (SKP1-cullin-F-box) protein ligase complex. Interacts with ADO3/FKF1, COI1/FBL2, EBF1/FBL6, PP2A13, PP2B10, UFO, SKIP2, SKIP15, SKIP16, SKIP32, CPR1/CPR30, At1g55000, At1g67340, At1g78100, At3g04660, At3g16740, At3g61590, At4g38940 and At5g49610. As to expression, expressed in young seedlings, cotyledons, roots, leaves, floral stems, inflorescences, pollen, and siliques, with a slightly higher level in inflorescence than in other tissues.

It localises to the nucleus. The protein operates within protein modification; protein ubiquitination. Its function is as follows. Involved in ubiquitination and subsequent proteasomal degradation of target proteins. Together with CUL1, RBX1 and a F-box protein, it forms a SCF E3 ubiquitin ligase complex. The functional specificity of this complex depends on the type of F-box protein. In the SCF complex, it serves as an adapter that links the F-box protein to CUL1. Plays a role during early flowers reproductive development. This Arabidopsis thaliana (Mouse-ear cress) protein is SKP1-like protein 11 (ASK11).